The chain runs to 230 residues: RNA chaperone ProQ (230 aa).

A disordered region spans residues 104–176 (AEAKARVQAQ…APRQNTEKLT (73 aa)). Over residues 115 to 132 (AEQRAKKREAEGDKETSK) the composition is skewed to basic and acidic residues.

The protein belongs to the ProQ family.

The protein resides in the cytoplasm. RNA chaperone with significant RNA binding, RNA strand exchange and RNA duplexing activities. May regulate ProP activity through an RNA-based, post-transcriptional mechanism. This Proteus mirabilis (strain HI4320) protein is RNA chaperone ProQ.